The chain runs to 734 residues: Terpene cyclase/mutase ntnI (734 aa).

The segment covering 1–12 (MQSHIGQWTSTA) has biased composition (polar residues). The interval 1–26 (MQSHIGQWTSTAKGHLSRDENGDEKT) is disordered. The span at 16–26 (LSRDENGDEKT) shows a compositional bias: basic and acidic residues. PFTB repeat units follow at residues 130–172 (AIEI…RLLG), 493–534 (LHNA…SGKT), 570–610 (RTRG…ALAG), and 619–668 (SRKG…GLMH).

This sequence belongs to the terpene cyclase/mutase family.

It functions in the pathway secondary metabolite biosynthesis; terpenoid biosynthesis. In terms of biological role, terpene cyclase/mutase; part of the gene cluster that mediates the biosynthesis of the meroterpenoids nectripenoids A and B, as well as cochliquninone D and isocochliquninone E. The pathway probably begins with the HR-PKS ntnH that catalyzes two chain-extension steps to form a reduced triketide, which then primes the SAT domain in the NR-PKS ntnG to initiate three more cycles of extension to give a linear hexaketide corresponding to the polyketide part of nectripenoids. The FAD-dependent monooxygenase ntnJ then performs an oxidative decarboxylation at C11 of the ntnH/ntnG product, via an electrophilic aromatic hydroxylation with concomitant ipso-decarboxylation. The membrane-bound polyprenyl transferase ntnF then introduces a farnesyl group before the FAD-dependent monooxygenase ntnK functions as the first epoxidase on terminal C12'-C13' olefin, followed by a second epoxidation on C7'-C8' catalyzed by ntnA. The terpene cyclase/mutase ntnI then initiates the sequential tricyclic ring formation through protonation of the terminal epoxide and catalyzes the regioselective and stereoselective 6/6/6-tricyclic ring formation. The cytochrome P450 monooxygenase ntnM may then hydroxylate C1'. This chain is Terpene cyclase/mutase ntnI, found in Nectria sp.